A 433-amino-acid chain; its full sequence is Type I acyl-CoA thioesterase mpaH (433 aa).

The abhydrolase domain stretch occupies residues 58-246 (HGVGLPKELY…VKARFDAAAD (189 aa)). Val60 contributes to the substrate binding site. Residue Ser139 is the Nucleophile of the active site. Phe140 is a binding site for substrate. Catalysis depends on residues Asp163 and His365.

This sequence belongs to the AB hydrolase superfamily. MpaH hydrolase family. As to quaternary structure, homodimer.

The protein localises to the peroxisome matrix. It carries out the reaction mycophenolyl-CoA + H2O = mycophenolate + CoA + H(+). The protein operates within secondary metabolite biosynthesis; terpenoid biosynthesis. In terms of biological role, type I acyl-CoA thioesterase; part of the gene cluster that mediates the biosynthesis of mycophenolic acid (MPA), the first isolated antibiotic natural product in the world obtained from a culture of Penicillium brevicompactum in 1893. MpaH acts as a peroxisomal acyl-CoA hydrolase that converts MPA-CoA into the final product MPA. The first step of the pathway is the synthesis of 5-methylorsellinic acid (5MOA) by the cytosolic polyketide synthase mpaC. 5MOA is then converted to the phthalide compound 5,7-dihydroxy-4,6-dimethylphthalide (DHMP) by the endoplasmic reticulum-bound cytochrome P450 monooxygenase mpaDE. MpaDE first catalyzes hydroxylation of 5-MOA to 4,6-dihydroxy-2-(hydroxymethyl)-3-methylbenzoic acid (DHMB). MpaDE then acts as a lactone synthase that catalyzes the ring closure to convert DHMB into DHMP. The next step is the prenylation of DHMP by the Golgi apparatus-associated prenyltransferase mpaA to yield farnesyl-DHMP (FDHMP). The ER-bound oxygenase mpaB then mediates the oxidative cleavage the C19-C20 double bond in FDHMP to yield FDHMP-3C via a mycophenolic aldehyde intermediate. The O-methyltransferase mpaG catalyzes the methylation of FDHMP-3C to yield MFDHMP-3C. After the cytosolic methylation of FDHMP-3C, MFDHMP-3C enters into peroxisomes probably via free diffusion due to its low molecular weight. Upon a peroxisomal CoA ligation reaction, catalyzed by a beta-oxidation component enzyme acyl-CoA ligase ACL891, MFDHMP-3C-CoA would then be restricted to peroxisomes for the following beta-oxidation pathway steps. The peroxisomal beta-oxidation machinery than converts MFDHMP-3C-CoA into MPA_CoA, via a beta-oxidation chain-shortening process. Finally mpaH acts as a peroxisomal acyl-CoA hydrolase with high substrate specificity toward MPA-CoA to release the final product MPA. This chain is Type I acyl-CoA thioesterase mpaH, found in Penicillium roqueforti (strain FM164).